The sequence spans 258 residues: Regulatory protein RecX (258 aa).

It belongs to the RecX family.

It is found in the cytoplasm. Modulates RecA activity. The sequence is that of Regulatory protein RecX from Streptococcus uberis (strain ATCC BAA-854 / 0140J).